The primary structure comprises 197 residues: Gene 49 protein (197 aa).

2 disordered regions span residues 1–49 and 114–157; these read MRGN…EVRP and FANL…RFCK. A compositionally biased stretch (gly residues) spans 117–135; it reads LGGGSKPNSGGGGSGGGGQ. Positions 136–146 are enriched in low complexity; it reads QHQSRAPQQAQ.

This Mycobacterium phage D29 (Mycobacteriophage D29) protein is Gene 49 protein (49).